Here is a 296-residue protein sequence, read N- to C-terminus: D-alanine--D-alanine ligase (296 aa).

Positions 103–293 (KEILMHHRMP…FDSFVKRIIE (191 aa)) constitute an ATP-grasp domain. 129 to 180 (ISFPVAVKPSSGGSSIATFKVKSIQELKHAYEEASKYGEVMIEQWVTGKEIT) lines the ATP pocket. The Mg(2+) site is built by Asp-247, Glu-260, and Asn-262.

The protein belongs to the D-alanine--D-alanine ligase family. Requires Mg(2+) as cofactor. The cofactor is Mn(2+).

Its subcellular location is the cytoplasm. The catalysed reaction is 2 D-alanine + ATP = D-alanyl-D-alanine + ADP + phosphate + H(+). The protein operates within cell wall biogenesis; peptidoglycan biosynthesis. In terms of biological role, cell wall formation. This is D-alanine--D-alanine ligase from Francisella tularensis subsp. tularensis (strain FSC 198).